We begin with the raw amino-acid sequence, 531 residues long: Peptide chain release factor 3 (531 aa).

Residues 13 to 282 enclose the tr-type G domain; it reads AKRRTFAIIS…TLIKYAPPPK (270 aa). GTP contacts are provided by residues 22–29, 90–94, and 144–147; these read SHPDAGKT, DTPGH, and NKLD.

It belongs to the TRAFAC class translation factor GTPase superfamily. Classic translation factor GTPase family. PrfC subfamily.

Its subcellular location is the cytoplasm. Functionally, increases the formation of ribosomal termination complexes and stimulates activities of RF-1 and RF-2. It binds guanine nucleotides and has strong preference for UGA stop codons. It may interact directly with the ribosome. The stimulation of RF-1 and RF-2 is significantly reduced by GTP and GDP, but not by GMP. The protein is Peptide chain release factor 3 of Psychrobacter cryohalolentis (strain ATCC BAA-1226 / DSM 17306 / VKM B-2378 / K5).